Reading from the N-terminus, the 403-residue chain is Aminomethyltransferase, mitochondrial (403 aa).

A mitochondrion-targeting transit peptide spans 1-28 (MQRAMTVVPHLGLRLQALPLALGRPLSR). E232, R261, and Y399 together coordinate substrate.

This sequence belongs to the GcvT family. In terms of assembly, the glycine cleavage system is composed of four proteins: P, T, L and H.

The protein localises to the mitochondrion. The enzyme catalyses N(6)-[(R)-S(8)-aminomethyldihydrolipoyl]-L-lysyl-[protein] + (6S)-5,6,7,8-tetrahydrofolate = N(6)-[(R)-dihydrolipoyl]-L-lysyl-[protein] + (6R)-5,10-methylene-5,6,7,8-tetrahydrofolate + NH4(+). Its function is as follows. The glycine cleavage system catalyzes the degradation of glycine. The sequence is that of Aminomethyltransferase, mitochondrial from Canis lupus familiaris (Dog).